A 358-amino-acid polypeptide reads, in one-letter code: Adenosine deaminase (358 aa).

His14 and His16 together coordinate Zn(2+). Positions 16, 18, and 183 each coordinate substrate. His212 lines the Zn(2+) pocket. Glu215 functions as the Proton donor in the catalytic mechanism. Position 294 (Asp294) interacts with Zn(2+). A substrate-binding site is contributed by Asp295.

Belongs to the metallo-dependent hydrolases superfamily. Adenosine and AMP deaminases family. The cofactor is Zn(2+).

The protein resides in the cell membrane. The protein localises to the cell junction. It localises to the cytoplasmic vesicle lumen. Its subcellular location is the cytoplasm. It is found in the lysosome. It catalyses the reaction adenosine + H2O + H(+) = inosine + NH4(+). The enzyme catalyses 2'-deoxyadenosine + H2O + H(+) = 2'-deoxyinosine + NH4(+). Its function is as follows. Catalyzes the hydrolytic deamination of adenosine and 2-deoxyadenosine. Plays an important role in purine metabolism and in adenosine homeostasis. Modulates signaling by extracellular adenosine, and so contributes indirectly to cellular signaling events. May act as a positive regulator of T-cell coactivation. This chain is Adenosine deaminase (ada), found in Xenopus tropicalis (Western clawed frog).